The primary structure comprises 747 residues: Eukaryotic translation initiation factor 3 subunit B (747 aa).

The region spanning 42 to 128 (AFVVVDGLPE…HTLRVNKLTD (87 aa)) is the RRM domain. WD repeat units lie at residues 195–234 (DRQHWTETFVQWSPLGTYLTSVHAQGVQLWGGPSWTRQRR), 236–292 (AHPF…PLRS), 310–349 (APKFPWPAFKWSADDKYVARLNPGQSISVYELPRMNLLDK), 520–563 (LEKK…EKPE), and 578–623 (ADHY…LREE).

It belongs to the eIF-3 subunit B family. Component of the eukaryotic translation initiation factor 3 (eIF-3) complex.

The protein localises to the cytoplasm. Functionally, RNA-binding component of the eukaryotic translation initiation factor 3 (eIF-3) complex, which is involved in protein synthesis of a specialized repertoire of mRNAs and, together with other initiation factors, stimulates binding of mRNA and methionyl-tRNAi to the 40S ribosome. The eIF-3 complex specifically targets and initiates translation of a subset of mRNAs involved in cell proliferation. The chain is Eukaryotic translation initiation factor 3 subunit B (prt-1) from Neurospora crassa (strain ATCC 24698 / 74-OR23-1A / CBS 708.71 / DSM 1257 / FGSC 987).